The sequence spans 149 residues: MHCPFCSAVDTKVIDSRLVAEGHQVRRRRECLLCHERFTTFEMAELVMPRVIKSNGSREPFNEDKLRAGILRALEKRPVSMEAIEKAVNHIKSRLRATGEREVASQLVGNLVMDELKSLDKVAYIRFASVYRSFEDIREFGEEIAKLEK.

Residues 3–34 (CPFCSAVDTKVIDSRLVAEGHQVRRRRECLLC) fold into a zinc finger. The ATP-cone domain occupies 49–139 (PRVIKSNGSR…VYRSFEDIRE (91 aa)).

This sequence belongs to the NrdR family. Zn(2+) serves as cofactor.

Functionally, negatively regulates transcription of bacterial ribonucleotide reductase nrd genes and operons by binding to NrdR-boxes. The sequence is that of Transcriptional repressor NrdR from Aeromonas hydrophila subsp. hydrophila (strain ATCC 7966 / DSM 30187 / BCRC 13018 / CCUG 14551 / JCM 1027 / KCTC 2358 / NCIMB 9240 / NCTC 8049).